The sequence spans 2412 residues: Centrosomal protein of 295 kDa (2412 aa).

The interval 1 to 540 (MKRKGMNTKL…KQADQPEVCC (540 aa)) is necessary for centriole targeting and microtubule association. Residue serine 13 is modified to Phosphoserine. Coiled coils occupy residues 63–84 (AEELRAKWEEAQSQKIQNLEKL), 114–134 (AERKRKAEVRHKEALKVQKNQ), 209–273 (DAHL…DLAR), 489–535 (RRKQ…QADQ), and 563–592 (HQLLQQNRLHKETVETARKRLLEYQTVLKE). Disordered stretches follow at residues 600 to 641 (SALV…YQPV) and 739 to 762 (LDSQQISSEDSENISSKPSEPSPF). Position 634 is a phosphoserine (serine 634). The segment covering 739–757 (LDSQQISSEDSENISSKPS) has biased composition (polar residues). A coiled-coil region spans residues 811-841 (AQQGDLRFLQEQLELQKKVLQARQEAREKLL). Disordered stretches follow at residues 871–891 (SASAESGNFQTSSTKSDATVS), 973–1005 (DTQSKKIQKQPLPANKKGLLPSQSEVSKAQDGS), 1158–1178 (LSSPSQVTDWGTSRGSVSVRS), and 1216–1240 (WVDTEKESFQSSPLTPENPSSQQTG). Composition is skewed to polar residues over residues 993-1005 (PSQSEVSKAQDGS), 1158-1176 (LSSPSQVTDWGTSRGSVSV), and 1224-1240 (FQSSPLTPENPSSQQTG). 2 coiled-coil regions span residues 1300-1327 (QQDSLKALQEQLATQREAIIHSRQEAHE) and 1448-1493 (QHDD…SKQI). Serine 1573 is subject to Phosphoserine. Disordered regions lie at residues 1820 to 1895 (LAHD…LSSV), 1916 to 1937 (ESFSEQTEHLEQESTNKQEETD), 2028 to 2048 (DLSSPGTSQEDSDFYQSSESS), and 2089 to 2111 (TEGSEQSFQQLRPEFSSQESQHA). Residues 1836-1868 (SKSHDDNAEAVKVKKSDVEDHAVLSHAVSKEEA) are compositionally biased toward basic and acidic residues. Over residues 1885-1895 (QEISQEPLSSV) the composition is skewed to polar residues. The segment covering 1921–1935 (QTEHLEQESTNKQEE) has biased composition (basic and acidic residues). Residues 2089–2108 (TEGSEQSFQQLRPEFSSQES) are compositionally biased toward polar residues. Positions 2367–2412 (SLQEAFMTRQTLTERSYQRQREIWNKTRLPQTKVSKEKLPTGCTGS) are ALMS motif.

In terms of assembly, interacts (via ALMS motif) with microtubules; this interaction is direct.

Its subcellular location is the cytoplasm. The protein localises to the cytoskeleton. The protein resides in the microtubule organizing center. It localises to the centrosome. It is found in the centriole. Its subcellular location is the spindle. Functionally, centriole-enriched microtubule-binding protein involved in centriole biogenesis. Essential for the generation of the distal portion of new-born centrioles in a CPAP- and CEP120-mediated elongation dependent manner during the cell cycle S/G2 phase after formation of the initiating cartwheel structure. Required for the recruitment of centriolar proteins, such as POC1B, POC5 and CEP135, into the distal portion of centrioles. Also required for centriole-to-centrosome conversion during mitotic progression, but is dispensable for cartwheel removal or centriole disengagement. Binds to and stabilizes centriolar microtubule. May be involved in ciliogenesis. The sequence is that of Centrosomal protein of 295 kDa from Mus musculus (Mouse).